Consider the following 119-residue polypeptide: Large ribosomal subunit protein uL22 (119 aa).

The protein belongs to the universal ribosomal protein uL22 family. In terms of assembly, part of the 50S ribosomal subunit.

Functionally, this protein binds specifically to 23S rRNA; its binding is stimulated by other ribosomal proteins, e.g. L4, L17, and L20. It is important during the early stages of 50S assembly. It makes multiple contacts with different domains of the 23S rRNA in the assembled 50S subunit and ribosome. The globular domain of the protein is located near the polypeptide exit tunnel on the outside of the subunit, while an extended beta-hairpin is found that lines the wall of the exit tunnel in the center of the 70S ribosome. The polypeptide is Large ribosomal subunit protein uL22 (Rickettsia canadensis (strain McKiel)).